We begin with the raw amino-acid sequence, 462 residues long: tRNA pseudouridine(32) synthase, mitochondrial (462 aa).

The transit peptide at 1–24 directs the protein to the mitochondrion; that stretch reads MQRNNRLRNLFTVPVIMARQLKRN. Positions 127–188 constitute an S4 RNA-binding domain; that stretch reads KLVDVFISEF…HEPPVTSRPI (62 aa). Aspartate 238 is a catalytic residue.

This sequence belongs to the pseudouridine synthase RluA family.

The protein localises to the mitochondrion. It carries out the reaction uridine(32) in tRNA = pseudouridine(32) in tRNA. In terms of biological role, responsible for synthesis of pseudouridine from uracil-32 in mitochondrial transfer RNAs. The polypeptide is tRNA pseudouridine(32) synthase, mitochondrial (PUS9) (Saccharomyces cerevisiae (strain ATCC 204508 / S288c) (Baker's yeast)).